Reading from the N-terminus, the 264-residue chain is 3-methyl-2-oxobutanoate hydroxymethyltransferase (264 aa).

The Mg(2+) site is built by Asp-43 and Asp-82. 3-methyl-2-oxobutanoate-binding positions include 43–44, Asp-82, and Lys-111; that span reads DS. Glu-113 serves as a coordination point for Mg(2+). The active-site Proton acceptor is the Glu-180.

This sequence belongs to the PanB family. In terms of assembly, homodecamer; pentamer of dimers. Mg(2+) is required as a cofactor.

Its subcellular location is the cytoplasm. The catalysed reaction is 3-methyl-2-oxobutanoate + (6R)-5,10-methylene-5,6,7,8-tetrahydrofolate + H2O = 2-dehydropantoate + (6S)-5,6,7,8-tetrahydrofolate. The protein operates within cofactor biosynthesis; (R)-pantothenate biosynthesis; (R)-pantoate from 3-methyl-2-oxobutanoate: step 1/2. In terms of biological role, catalyzes the reversible reaction in which hydroxymethyl group from 5,10-methylenetetrahydrofolate is transferred onto alpha-ketoisovalerate to form ketopantoate. The chain is 3-methyl-2-oxobutanoate hydroxymethyltransferase from Campylobacter fetus subsp. fetus (strain 82-40).